We begin with the raw amino-acid sequence, 441 residues long: Serine hydroxymethyltransferase (441 aa).

Residues leucine 119 and 123–125 (GHL) each bind (6S)-5,6,7,8-tetrahydrofolate. The residue at position 228 (lysine 228) is an N6-(pyridoxal phosphate)lysine. 370–372 (SPF) provides a ligand contact to (6S)-5,6,7,8-tetrahydrofolate.

It belongs to the SHMT family. As to quaternary structure, homodimer. Pyridoxal 5'-phosphate serves as cofactor.

It is found in the cytoplasm. It catalyses the reaction (6R)-5,10-methylene-5,6,7,8-tetrahydrofolate + glycine + H2O = (6S)-5,6,7,8-tetrahydrofolate + L-serine. It participates in one-carbon metabolism; tetrahydrofolate interconversion. Its pathway is amino-acid biosynthesis; glycine biosynthesis; glycine from L-serine: step 1/1. Catalyzes the reversible interconversion of serine and glycine with tetrahydrofolate (THF) serving as the one-carbon carrier. This reaction serves as the major source of one-carbon groups required for the biosynthesis of purines, thymidylate, methionine, and other important biomolecules. Also exhibits THF-independent aldolase activity toward beta-hydroxyamino acids, producing glycine and aldehydes, via a retro-aldol mechanism. The chain is Serine hydroxymethyltransferase from Chlorobium phaeovibrioides (strain DSM 265 / 1930) (Prosthecochloris vibrioformis (strain DSM 265)).